We begin with the raw amino-acid sequence, 212 residues long: Protein Thf1 (212 aa).

Residues 179 to 201 (ERMEQAVELMQETLAADRRKKEK) are a coiled coil.

The protein belongs to the THF1 family.

Its function is as follows. May be involved in photosynthetic membrane biogenesis. The sequence is that of Protein Thf1 from Parasynechococcus marenigrum (strain WH8102).